The following is a 311-amino-acid chain: Homeobox protein Hox-B1a (311 aa).

The homeobox DNA-binding region spans 217–276 (QNTIRTNFTTKQLTELEKEFHFSKYLTRARRVEIAATLELNETQVKIWFQNRRMKQKKRE). The tract at residues 267 to 311 (NRRMKQKKREKEGLAPASSTSSKDLEDQSDHSTSTSPEASPSPDS) is disordered. The segment covering 298–311 (STSTSPEASPSPDS) has biased composition (low complexity).

This sequence belongs to the Antp homeobox family. Labial subfamily.

It is found in the nucleus. Sequence-specific transcription factor which is part of a developmental regulatory system that provides cells with specific positional identities on the anterior-posterior axis. This chain is Homeobox protein Hox-B1a (hoxb1a), found in Danio rerio (Zebrafish).